The primary structure comprises 107 residues: ATP synthase peripheral stalk subunit F6, mitochondrial (107 aa).

A mitochondrion-targeting transit peptide spans 1-31 (MILQRLFRFSVIRSAVSVYLRRNIGVTAVAF). N6-acetyllysine occurs at positions 40, 45, and 78. Lys-93 and Lys-98 each carry N6-acetyllysine; alternate. An N6-succinyllysine; alternate mark is found at Lys-93 and Lys-98. Lys-104 carries the post-translational modification N6-acetyllysine.

It belongs to the eukaryotic ATPase subunit F6 family. Component of the ATP synthase complex composed at least of ATP5F1A/subunit alpha, ATP5F1B/subunit beta, ATP5MC1/subunit c (homooctomer), MT-ATP6/subunit a, MT-ATP8/subunit 8, ATP5ME/subunit e, ATP5MF/subunit f, ATP5MG/subunit g, ATP5MK/subunit k, ATP5MJ/subunit j, ATP5F1C/subunit gamma, ATP5F1D/subunit delta, ATP5F1E/subunit epsilon, ATP5PF/subunit F6, ATP5PB/subunit b, ATP5PD/subunit d, ATP5PO/subunit OSCP. ATP synthase complex consists of a soluble F(1) head domain (subunits alpha(3) and beta(3)) - the catalytic core - and a membrane F(0) domain - the membrane proton channel (subunits c, a, 8, e, f, g, k and j). These two domains are linked by a central stalk (subunits gamma, delta, and epsilon) rotating inside the F1 region and a stationary peripheral stalk (subunits F6, b, d, and OSCP).

It is found in the mitochondrion. It localises to the mitochondrion inner membrane. In terms of biological role, subunit F6, of the mitochondrial membrane ATP synthase complex (F(1)F(0) ATP synthase or Complex V) that produces ATP from ADP in the presence of a proton gradient across the membrane which is generated by electron transport complexes of the respiratory chain. ATP synthase complex consist of a soluble F(1) head domain - the catalytic core - and a membrane F(1) domain - the membrane proton channel. These two domains are linked by a central stalk rotating inside the F(1) region and a stationary peripheral stalk. During catalysis, ATP synthesis in the catalytic domain of F(1) is coupled via a rotary mechanism of the central stalk subunits to proton translocation. In vivo, can only synthesize ATP although its ATP hydrolase activity can be activated artificially in vitro. Part of the complex F(0) domain. Part of the complex F(0) domain and the peripheric stalk, which acts as a stator to hold the catalytic alpha(3)beta(3) subcomplex and subunit a/ATP6 static relative to the rotary elements. This chain is ATP synthase peripheral stalk subunit F6, mitochondrial, found in Pongo abelii (Sumatran orangutan).